The following is a 464-amino-acid chain: Ribosomal protein uS12 methylthiotransferase RimO (464 aa).

Residues 14-125 form the MTTase N-terminal domain; the sequence is PTVAFAHLGC…IVEVLQRVEA (112 aa). Positions 23, 59, 88, 163, 167, and 170 each coordinate [4Fe-4S] cluster. In terms of domain architecture, Radical SAM core spans 149 to 378; that stretch reads TTDQAVAFLK…MALQQPISAE (230 aa). The TRAM domain occupies 381–452; the sequence is HSWVSRTVDV…VYDLSGRIVG (72 aa).

It belongs to the methylthiotransferase family. RimO subfamily. It depends on [4Fe-4S] cluster as a cofactor.

The protein localises to the cytoplasm. The enzyme catalyses L-aspartate(89)-[ribosomal protein uS12]-hydrogen + (sulfur carrier)-SH + AH2 + 2 S-adenosyl-L-methionine = 3-methylsulfanyl-L-aspartate(89)-[ribosomal protein uS12]-hydrogen + (sulfur carrier)-H + 5'-deoxyadenosine + L-methionine + A + S-adenosyl-L-homocysteine + 2 H(+). Functionally, catalyzes the methylthiolation of an aspartic acid residue of ribosomal protein uS12. The polypeptide is Ribosomal protein uS12 methylthiotransferase RimO (Parasynechococcus marenigrum (strain WH8102)).